A 507-amino-acid polypeptide reads, in one-letter code: Cytochrome P450 monooxygenase cloA (507 aa).

The helical transmembrane segment at 15 to 35 (WTWILLTTCIALISPLVLKGI) threads the bilayer. Asparagine 247 carries an N-linked (GlcNAc...) asparagine glycan. Cysteine 450 provides a ligand contact to heme.

This sequence belongs to the cytochrome P450 family. Heme is required as a cofactor.

It localises to the membrane. The protein operates within alkaloid biosynthesis; ergot alkaloid biosynthesis. In terms of biological role, cytochrome P450 monooxygenase; part of the gene cluster that mediates the biosynthesis of fungal ergot alkaloid. DmaW catalyzes the first step of ergot alkaloid biosynthesis by condensing dimethylallyl diphosphate (DMAP) and tryptophan to form 4-dimethylallyl-L-tryptophan. The second step is catalyzed by the methyltransferase easF that methylates 4-dimethylallyl-L-tryptophan in the presence of S-adenosyl-L-methionine, resulting in the formation of 4-dimethylallyl-L-abrine. The catalase easC and the FAD-dependent oxidoreductase easE then transform 4-dimethylallyl-L-abrine to chanoclavine-I which is further oxidized by easD in the presence of NAD(+), resulting in the formation of chanoclavine-I aldehyde. Agroclavine dehydrogenase easG then mediates the conversion of chanoclavine-I aldehyde to agroclavine via a non-enzymatic adduct reaction: the substrate is an iminium intermediate that is formed spontaneously from chanoclavine-I aldehyde in the presence of glutathione. The presence of easA is not required to complete this reaction. Further conversion of agroclavine to paspalic acid is a two-step process involving oxidation of agroclavine to elymoclavine and of elymoclavine to paspalic acid, the second step being performed by the elymoclavine oxidase cloA. Paspalic acid is then further converted to D-lysergic acid. Ergopeptines are assembled from D-lysergic acid and three different amino acids by the D-lysergyl-peptide-synthetases composed each of a monomudular and a trimodular nonribosomal peptide synthetase subunit. LpsB and lpsC encode the monomodular subunits responsible for D-lysergic acid activation and incorporation into the ergopeptine backbone. LpsA1 and A2 subunits encode the trimodular nonribosomal peptide synthetase assembling the tripeptide portion of ergopeptines. LpsA1 is responsible for formation of the major ergopeptine, ergotamine, and lpsA2 for alpha-ergocryptine, the minor ergopeptine of the total alkaloid mixture elaborated by C.purpurea. D-lysergyl-tripeptides are assembled by the nonribosomal peptide synthetases and released as N-(D-lysergyl-aminoacyl)-lactams. Cyclolization of the D-lysergyl-tripeptides is performed by the Fe(2+)/2-ketoglutarate-dependent dioxygenase easH which introduces a hydroxyl group into N-(D-lysergyl-aminoacyl)-lactam at alpha-C of the aminoacyl residue followed by spontaneous condensation with the terminal lactam carbonyl group. The chain is Cytochrome P450 monooxygenase cloA from Claviceps purpurea (strain 20.1) (Ergot fungus).